The chain runs to 215 residues: Enolase-phosphatase E1 (215 aa).

Mg(2+) is bound by residues Asp11 and Glu13. Substrate is bound by residues 117–118 (SS) and Lys151. Asp174 contributes to the Mg(2+) binding site.

The protein belongs to the HAD-like hydrolase superfamily. MasA/MtnC family. In terms of assembly, monomer. It depends on Mg(2+) as a cofactor.

The protein resides in the cytoplasm. Its subcellular location is the nucleus. It catalyses the reaction 5-methylsulfanyl-2,3-dioxopentyl phosphate + H2O = 1,2-dihydroxy-5-(methylsulfanyl)pent-1-en-3-one + phosphate. Its pathway is amino-acid biosynthesis; L-methionine biosynthesis via salvage pathway; L-methionine from S-methyl-5-thio-alpha-D-ribose 1-phosphate: step 3/6. It functions in the pathway amino-acid biosynthesis; L-methionine biosynthesis via salvage pathway; L-methionine from S-methyl-5-thio-alpha-D-ribose 1-phosphate: step 4/6. Its function is as follows. Bifunctional enzyme that catalyzes the enolization of 2,3-diketo-5-methylthiopentyl-1-phosphate (DK-MTP-1-P) into the intermediate 2-hydroxy-3-keto-5-methylthiopentenyl-1-phosphate (HK-MTPenyl-1-P), which is then dephosphorylated to form the acireductone 1,2-dihydroxy-3-keto-5-methylthiopentene (DHK-MTPene). In Schizosaccharomyces japonicus (strain yFS275 / FY16936) (Fission yeast), this protein is Enolase-phosphatase E1 (utr4).